We begin with the raw amino-acid sequence, 227 residues long: UPF0173 metal-dependent hydrolase BCE33L4354 (227 aa).

This sequence belongs to the UPF0173 family.

In Bacillus cereus (strain ZK / E33L), this protein is UPF0173 metal-dependent hydrolase BCE33L4354.